The chain runs to 531 residues: MVGCDLLWLAAASCVLTLVSPSTIHQGYGRPRNSSNLDLDCGSPDSPSSGICFDPCQNHTVLNDPTRSTENNDSSVAWCDDNLHGWYRFVGDGGVKMPETCVSVFRCHTSAPMWLSGSHPILGDGIVSHTACANWNENCCFWRSEVQVKACSEELGEYHVYKLQGTPECSLRYCTDPSTAPKNCEITCRPEEECVFQNNNWSCVCRQDLHVSDSQSLQPLLDCGDNEIKVKLDKCLLGGMGFKEEIIAYLNDRNCNGTMQDEPNNWVSMTSPVVANYCGNILEKNGTHAIYRNTLSLATDFIIRDFRVNVNFQCAYPLDMSVSLETALQPIVSSLTVDVDGAGEFNVKMALFQDQSYTNPYEGAEVLLPVESILYVGVLLNRGDTSRFKLLLTNCYATPSEDRHDPVKYFIIKNRCPNQRDSTINVRENGVSSESRFSVQMFMFAGNYDLVFLHCEVYLCDSTTEQCQPSCSTNRLRSSRPAIDYNRVLDLGPITKRSAQSSATSKGTPHTTGFLLAWPMFFLPVFLALLF.

The first 21 residues, 1-21 (MVGCDLLWLAAASCVLTLVSP), serve as a signal peptide directing secretion. A glycan (N-linked (GlcNAc...) asparagine) is linked at N33. Residues 34–53 (SSNLDLDCGSPDSPSSGICF) are beta hairpin. Disulfide bonds link C41/C52, C56/C151, C79/C169, C101/C139, C107/C174, C132/C140, C184/C194, C188/C203, C205/C235, C223/C314, and C255/C278. The D10C stretch occupies residues 54–74 (DPCQNHTVLNDPTRSTENNDS). N-linked (GlcNAc...) asparagine glycosylation is found at N58 and N72. The 45-residue stretch at 180–224 (APKNCEITCRPEEECVFQNNNWSCVCRQDLHVSDSQSLQPLLDCG) folds into the EGF-like domain. N200 carries N-linked (GlcNAc...) asparagine glycosylation. Residues 222-315 (DCGDNEIKVK…FRVNVNFQCA (94 aa)) form a ZP-N region. The region spanning 222 to 478 (DCGDNEIKVK…PSCSTNRLRS (257 aa)) is the ZP domain. N-linked (GlcNAc...) asparagine glycosylation is found at N256 and N285. Positions 316–339 (YPLDMSVSLETALQPIVSSLTVDV) are flexible ZP-N/ZP-C linker. The segment at 340–351 (DGAGEFNVKMAL) is internal hydrophobic patch (IHP). Residues 340–478 (DGAGEFNVKM…PSCSTNRLRS (139 aa)) form a ZP-C region. 3 cysteine pairs are disulfide-bonded: C395–C455, C416–C471, and C460–C467. The external hydrophobic patch (EHP) stretch occupies residues 485 to 493 (YNRVLDLGP).

As to quaternary structure, interacts with SYCN. Interacts with bacterial adhesin fimH. N-glycosylated. As to expression, specifically expressed by M (microfold) cells which are atypical epithelial cells of the intestine.

Its subcellular location is the zymogen granule membrane. The protein localises to the secreted. It is found in the cell membrane. The protein resides in the apical cell membrane. It localises to the membrane raft. Its subcellular location is the endosome. Its function is as follows. Functions as an intestinal M-cell transcytotic receptor specific of type-I-piliated bacteria that participates in the mucosal immune response toward these bacteria. At the apical membrane of M-cells it binds fimH, a protein of the bacteria type I pilus tip. Internalizes bound bacteria, like E.coli and S.typhimurium, from the lumen of the intestine and delivers them, through M-cells, to the underlying organized lymphoid follicles where they are captured by antigen-presenting dendritic cells to elicit a mucosal immune response. This is Pancreatic secretory granule membrane major glycoprotein GP2 from Mus musculus (Mouse).